Reading from the N-terminus, the 567-residue chain is Proline--tRNA ligase (567 aa).

It belongs to the class-II aminoacyl-tRNA synthetase family. ProS type 1 subfamily. In terms of assembly, homodimer.

It localises to the cytoplasm. It carries out the reaction tRNA(Pro) + L-proline + ATP = L-prolyl-tRNA(Pro) + AMP + diphosphate. Its function is as follows. Catalyzes the attachment of proline to tRNA(Pro) in a two-step reaction: proline is first activated by ATP to form Pro-AMP and then transferred to the acceptor end of tRNA(Pro). As ProRS can inadvertently accommodate and process non-cognate amino acids such as alanine and cysteine, to avoid such errors it has two additional distinct editing activities against alanine. One activity is designated as 'pretransfer' editing and involves the tRNA(Pro)-independent hydrolysis of activated Ala-AMP. The other activity is designated 'posttransfer' editing and involves deacylation of mischarged Ala-tRNA(Pro). The misacylated Cys-tRNA(Pro) is not edited by ProRS. This is Proline--tRNA ligase from Staphylococcus aureus (strain USA300).